Reading from the N-terminus, the 306-residue chain is Diterpene cyclase eriG (306 aa).

Helical transmembrane passes span 13 to 33 (IFFG…SIFA) and 43 to 63 (ATLV…IYFF). N-linked (GlcNAc...) asparagine glycosylation occurs at asparagine 64. 4 helical membrane passes run 115-135 (FLPE…TSYG), 161-181 (IAPA…WAGL), 213-233 (LIIT…AGIF), and 265-285 (MFYT…GLGL).

The protein belongs to the UbiA prenyltransferase family. Mg(2+) is required as a cofactor.

It localises to the membrane. The enzyme catalyses (2E,6E,10E)-geranylgeranyl diphosphate = (-)-cyatha-3,12-diene + diphosphate. It functions in the pathway secondary metabolite biosynthesis. EDTA completely blocks the reaction. Its function is as follows. Diterpene cyclase; part of the gene cluster that mediates the biosynthesis of erinacines, cyathane-xylosides that show unique biological activities, including leishmanicidal activity, stimulating activity for nerve growth-factor synthesis, and agonistic activity toward the kappa opioid receptor. Within the pathway, eriG acts as a diterpene cyclase that converts geranylgeranyl diphosphate (GGPP) into cyatha-3,12-diene. EriG is unable to use geranyl diphosphate (GPP) or farnesyl diphosphate (FPP) as substrates. The first step of the erinacines biosynthesis pathway is catalyzed by the geranylgeranyl diphosphate (GGPP) synthase eriE via conversion of farnesyl pyrophosphate and isopentyl pyrophosphate into geranylgeranyl pyrophosphate (GGPP). GGPP is then substrate of the diterpene cyclase eriG for the production of cyatha-3,12-diene. The cytochrome P450 monooxygenase eriI then hydroxylates cyatha-3,12-diene at C-14 of the seven-membered ring to produce erinacol, which is further hydroxylated at C-15 by the cytochrome P450 monooxygenase eriC to yield cyathadiol. The cytochrome P450 monooxygenase eriA then catalyzes C-11 hydroxylation in the presence of the short chain dehydrogenase/reductase (SDR) eriH, which leads to the production of cyathatriol. The acetyltransferase eriL converts cyathatriol into 11-O-acetyl-cyathatriol. The SDR eriH catalyzes further oxidation of 11-O-acetyl-cyathatriol into 1-O-acetylcyathin A3. Finally, the glycosyl transferase eriJ tranfers xylose from UDP-xylose onto C-14 of 11-O-acetyl-cyathatriol to form eracine Q. EriJ is also able to convert 11-O-acetyl-cyathatriol to eracine Q2 by using UDP-D-glucose as cosubstrate, but at a lower rate. This Hericium erinaceus (Lion's mane mushroom) protein is Diterpene cyclase eriG.